The primary structure comprises 141 residues: Phosphoribosyl-AMP cyclohydrolase (141 aa).

Position 88 (Asp-88) interacts with Mg(2+). Zn(2+) is bound at residue Cys-89. Positions 90 and 92 each coordinate Mg(2+). Cys-109 and Cys-116 together coordinate Zn(2+).

This sequence belongs to the PRA-CH family. Homodimer. The cofactor is Mg(2+). Zn(2+) serves as cofactor.

Its subcellular location is the cytoplasm. It catalyses the reaction 1-(5-phospho-beta-D-ribosyl)-5'-AMP + H2O = 1-(5-phospho-beta-D-ribosyl)-5-[(5-phospho-beta-D-ribosylamino)methylideneamino]imidazole-4-carboxamide. It participates in amino-acid biosynthesis; L-histidine biosynthesis; L-histidine from 5-phospho-alpha-D-ribose 1-diphosphate: step 3/9. In terms of biological role, catalyzes the hydrolysis of the adenine ring of phosphoribosyl-AMP. The chain is Phosphoribosyl-AMP cyclohydrolase from Paracidovorax citrulli (strain AAC00-1) (Acidovorax citrulli).